A 382-amino-acid chain; its full sequence is Small ribosomal subunit protein bS1 homolog (382 aa).

S1 motif domains follow at residues Gly-18–Arg-85, Gly-103–Lys-168, Gly-189–Lys-257, and Gly-274–Lys-343. At Ser-244 the chain carries Phosphoserine.

It belongs to the bacterial ribosomal protein bS1 family.

The sequence is that of Small ribosomal subunit protein bS1 homolog from Bacillus cereus (strain ATCC 10987 / NRS 248).